Here is a 242-residue protein sequence, read N- to C-terminus: RNA polymerase sigma factor for flagellar operon (242 aa).

The Polymerase core binding motif lies at 55 to 68 (DMQQIGLIALVEAG). A DNA-binding region (H-T-H motif) is located at residues 211-230 (LHEIALVLDLTPPRICQLHK).

This sequence belongs to the sigma-70 factor family.

Its function is as follows. Sigma factors are initiation factors that promote the attachment of RNA polymerase to specific initiation sites and are then released. This alternative sigma factor is specific for the flagellin gene (fliC) expression. This is RNA polymerase sigma factor for flagellar operon (lafS) from Vibrio parahaemolyticus serotype O3:K6 (strain RIMD 2210633).